The sequence spans 506 residues: MKRTPTAEEREREAKKLRLLEELEDTWLPYLTPKDDEFYQQWQLKYPKLILREAGSVPEDLHKEVQEAFLTLHKHGCFFRDLVRIQGKDLLTPVSRILIGNPGCTYKYLNTRLFTVPWPVKGASTKYDEAGIAAACQTFLKLNDYLQIETIQALEELACKEKSNIDAVPVCIGPDFPRVGMGSFDGQDELDIKNRAAYNVTLLNFMDPQKMPYLKEEPYFGMGKMAVSWHHDENLVERSAVAVYSYSCEGPEEESEDDPQLEGRDPDTWHVGFKISWDIETPGLAIPLHQGDCYFMLDDLNATHQHCVLAGLPPRFSSTHRVAECSTGTLDYILQRCQLALQNVRDEADNGDVSLKSFEPVVLKQGEEIHNEVEFEWLRQYWFQGNRYRKCTDWWCQPMTQLEGLWKKMEGVTNAVLHEVRREGVPVEQRNEILTAILALLTTRQNLRREWHARCQSRIARTLPVDQKPECRPYWEKDDPSMPLPFDLTDIVSELRGEFGTLPWSA.

A Phosphothreonine modification is found at Thr4. A fe2OG dioxygenase domain region spans residues 32–326; sequence TPKDDEFYQQ…SSTHRVAECS (295 aa). Substrate-binding residues include Arg96 and Tyr108. Residue Asn204 coordinates 2-oxoglutarate. The loop L1; predicted to block binding of double-stranded DNA or RNA stretch occupies residues 212 to 223; that stretch reads PYLKEEPYFGMG. At Lys215 the chain carries N6-acetyllysine. Residues His230 and Asp232 each coordinate Fe cation. 230–233 lines the substrate pocket; that stretch reads HHDE. Residue Tyr294 coordinates 2-oxoglutarate. Residue His306 participates in Fe cation binding. 2-oxoglutarate-binding positions include 315-317, Thr319, and Arg321; that span reads RFS.

It belongs to the fto family. As to quaternary structure, monomer. May also exist as homodimer. It depends on Fe(2+) as a cofactor.

The protein resides in the nucleus. It is found in the nucleus speckle. Its subcellular location is the cytoplasm. The catalysed reaction is a 5'-end (N(7)-methyl 5'-triphosphoguanosine)-(N(6),2'-O-dimethyladenosine) in mRNA + 2-oxoglutarate + O2 = a 5'-end (N(7)-methyl 5'-triphosphoguanosine)-(2'-O-methyladenosine) in mRNA + formaldehyde + succinate + CO2. It catalyses the reaction an N(6)-methyladenosine in mRNA + 2-oxoglutarate + O2 = an adenosine in mRNA + formaldehyde + succinate + CO2. The enzyme catalyses N(6)-methyladenosine in U6 snRNA + 2-oxoglutarate + O2 = adenosine in U6 snRNA + formaldehyde + succinate + CO2. It carries out the reaction a 5'-end (N(7)-methyl 5'-triphosphoguanosine)-(N(6),2'-O-dimethyladenosine) in U6 snRNA + 2-oxoglutarate + O2 = a 5'-end (N(7)-methyl 5'-triphosphoguanosine)-(2'-O-methyladenosine) in U6 snRNA + formaldehyde + succinate + CO2. The catalysed reaction is an N(1)-methyladenosine in tRNA + 2-oxoglutarate + O2 = an adenosine in tRNA + formaldehyde + succinate + CO2. In terms of biological role, RNA demethylase that mediates oxidative demethylation of different RNA species, such as mRNAs, tRNAs and snRNAs, and acts as a regulator of fat mass, adipogenesis and energy homeostasis. Specifically demethylates N(6)-methyladenosine (m6A) RNA, the most prevalent internal modification of messenger RNA (mRNA) in higher eukaryotes. M6A demethylation by FTO affects mRNA expression and stability. Also able to demethylate m6A in U6 small nuclear RNA (snRNA). Mediates demethylation of N(6),2'-O-dimethyladenosine cap (m6A(m)), by demethylating the N(6)-methyladenosine at the second transcribed position of mRNAs and U6 snRNA. Demethylation of m6A(m) in the 5'-cap by FTO affects mRNA stability by promoting susceptibility to decapping. Also acts as a tRNA demethylase by removing N(1)-methyladenine from various tRNAs. Has no activity towards 1-methylguanine. Has no detectable activity towards double-stranded DNA. Also able to repair alkylated DNA and RNA by oxidative demethylation: demethylates single-stranded RNA containing 3-methyluracil, single-stranded DNA containing 3-methylthymine and has low demethylase activity towards single-stranded DNA containing 1-methyladenine or 3-methylcytosine. Ability to repair alkylated DNA and RNA is however unsure in vivo. Involved in the regulation of fat mass, adipogenesis and body weight, thereby contributing to the regulation of body size and body fat accumulation. Involved in the regulation of thermogenesis and the control of adipocyte differentiation into brown or white fat cells. Regulates activity of the dopaminergic midbrain circuitry via its ability to demethylate m6A in mRNAs. Plays an oncogenic role in a number of acute myeloid leukemias by enhancing leukemic oncogene-mediated cell transformation: acts by mediating m6A demethylation of target transcripts such as MYC, CEBPA, ASB2 and RARA, leading to promote their expression. In Canis lupus familiaris (Dog), this protein is Alpha-ketoglutarate-dependent dioxygenase FTO (FTO).